The following is a 729-amino-acid chain: MAKIIWTRTDEAPLLATYSLKPVVEAFAATAGIEVETRDISLAGRILAQFADQLPEEQKVSDALAELGELAKTPEANIIKLPNISASVPQLKAAVKELQEQGYDLPEYEDAKDRYAAVIGSNVNPVLREGNSDRRAPVAVKNFVKKFPHRMGEWSADSKTNVATMGADDFRSNEKSVIMDEADTVVIKHVAADGTETVLKDSLPLLKGEVIDGTFISAKALDAFLLDQVKRAKEEGILFSAHMKATMMKVSDPIIFGHIVRAYFADVYAQYGEQLLAAGLNGENGLAAIYAGLDKLDNGAEIKAAFDKGLEEGPDLAMVNSAKGITNLHVPSDVIIDASMPAMIRTSGKMWNKDDQTQDALAVIPDSSYAGVYQTVIEDCRKNGAFDPTTMGTVPNVGLMAQKAEEYGSHDKTFRIEADGKVQVVASNGDVLIEHDVEKGDIWRACQTKDAPIQDWVKLAVNRARLSGMPAVFWLDPARAHDRNLTTLVEKYLADHDTEGLDIQILSPVEATQHAIDRIRRGEDTISVTGNVLRDYNTDLFPILELGTSAKMLSVVPLMAGGGLFETGAGGSAPKHVQQVIEENHLRWDSLGEFLALAESFRHELNTRNNTKAGVLADALDRATEKLLNEEKSPSRKVGEIDNRGSHFWLATYWADELANQTEDAELAETFAPVAEALNNQAADIDAALIGEQGKPVDLGGYYAPSDEKTSAIMRPVAAFNEIIDSLKK.

Residues Asn-83 and Ser-85 each coordinate NADP(+). D-threo-isocitrate-binding residues include Ser-121, Asn-124, Arg-128, Arg-134, and Lys-244. Asn-124 is a binding site for NADP(+). Position 337 (Asp-337) interacts with Mg(2+). 2 residues coordinate D-threo-isocitrate: Tyr-407 and Arg-534. Positions 535 and 539 each coordinate Mg(2+). NADP(+) contacts are provided by Ser-572, His-576, Arg-587, Asp-589, and Arg-636.

Belongs to the monomeric-type IDH family. In terms of assembly, monomer. Requires Mg(2+) as cofactor. Mn(2+) is required as a cofactor.

It catalyses the reaction D-threo-isocitrate + NADP(+) = 2-oxoglutarate + CO2 + NADPH. In terms of biological role, catalyzes the oxidative decarboxylation of isocitrate to 2-oxoglutarate and carbon dioxide with the concomitant reduction of NADP(+). In Corynebacterium efficiens (strain DSM 44549 / YS-314 / AJ 12310 / JCM 11189 / NBRC 100395), this protein is Isocitrate dehydrogenase [NADP].